The following is a 315-amino-acid chain: Ribosomal RNA small subunit methyltransferase H (315 aa).

S-adenosyl-L-methionine-binding positions include 35–37, D55, F80, D102, and Q109; that span reads GGH.

The protein belongs to the methyltransferase superfamily. RsmH family.

It is found in the cytoplasm. The enzyme catalyses cytidine(1402) in 16S rRNA + S-adenosyl-L-methionine = N(4)-methylcytidine(1402) in 16S rRNA + S-adenosyl-L-homocysteine + H(+). Its function is as follows. Specifically methylates the N4 position of cytidine in position 1402 (C1402) of 16S rRNA. In Shewanella halifaxensis (strain HAW-EB4), this protein is Ribosomal RNA small subunit methyltransferase H.